Reading from the N-terminus, the 267-residue chain is Ribosomal RNA small subunit methyltransferase A (267 aa).

Asparagine 13, leucine 15, glycine 39, glutamate 59, aspartate 87, and asparagine 106 together coordinate S-adenosyl-L-methionine.

It belongs to the class I-like SAM-binding methyltransferase superfamily. rRNA adenine N(6)-methyltransferase family. RsmA subfamily.

Its subcellular location is the cytoplasm. It catalyses the reaction adenosine(1518)/adenosine(1519) in 16S rRNA + 4 S-adenosyl-L-methionine = N(6)-dimethyladenosine(1518)/N(6)-dimethyladenosine(1519) in 16S rRNA + 4 S-adenosyl-L-homocysteine + 4 H(+). Specifically dimethylates two adjacent adenosines (A1518 and A1519) in the loop of a conserved hairpin near the 3'-end of 16S rRNA in the 30S particle. May play a critical role in biogenesis of 30S subunits. The chain is Ribosomal RNA small subunit methyltransferase A from Sulfurimonas denitrificans (strain ATCC 33889 / DSM 1251) (Thiomicrospira denitrificans (strain ATCC 33889 / DSM 1251)).